The primary structure comprises 561 residues: Formate--tetrahydrofolate ligase (561 aa).

66–73 (TPAGEGKT) is a binding site for ATP.

Belongs to the formate--tetrahydrofolate ligase family.

The catalysed reaction is (6S)-5,6,7,8-tetrahydrofolate + formate + ATP = (6R)-10-formyltetrahydrofolate + ADP + phosphate. It functions in the pathway one-carbon metabolism; tetrahydrofolate interconversion. This is Formate--tetrahydrofolate ligase from Methylibium petroleiphilum (strain ATCC BAA-1232 / LMG 22953 / PM1).